A 284-amino-acid chain; its full sequence is Interferon antagonist OPG039 (284 aa).

ANK repeat units follow at residues 29–58 (NGHS…LKNL), 60–89 (DNEF…DDSQ), 93–122 (KGNT…RLMF), 127–157 (GWKT…PFDL), 159–188 (ILLS…STNT), and 192–221 (LFIP…NIYS).

This sequence belongs to the orthopoxvirus OPG039 family.

The protein localises to the host cytoplasm. The protein resides in the host nucleus. Functionally, inhibits antiviral activity induced by type I interferons. Does not block signal transduction of IFN, but is important to counter the host antiviral state induced by a pre-treatment with IFN. Plays a role in the inhibition of host NF-kappa-B activation by preventing the acetylation of the RELA/p65 subunit of NF-kappaB. The sequence is that of Interferon antagonist OPG039 (OPG039) from Cynomys gunnisoni (Gunnison's prairie dog).